A 359-amino-acid polypeptide reads, in one-letter code: MAENYDRASELKAFDEMKIGVKGLVDAGVTKVPRIFHNPHVNVANPKPTSTVVMIPTIDLGGVFESTVVRESVVAKVKDAMEKFGFFQAINHGVPLDVMEKMINGIRRFHDQDPEVRKMFYTRDKTKKLKYHSNADLYESPAASWRDTLSCVMAPDVPKAQDLPEVCGEIMLEYSKEVMKLAELMFEILSEALGLSPNHLKEMDCAKGLWMLCHCFPPCPEPNRTFGGAQHTDRSFLTILLNDNNGGLQVLYDGYWIDVPPNPEALIFNVGDFLQLISNDKFVSMEHRILANGGEEPRISVACFFVHTFTSPSSRVYGPIKELLSELNPPKYRDTTSESSNHYVARKPNGNSSLDHLRI.

A Fe2OG dioxygenase domain is found at 207–308 (KGLWMLCHCF…ISVACFFVHT (102 aa)). 3 residues coordinate Fe cation: H231, D233, and H287. The interval 329–359 (PPKYRDTTSESSNHYVARKPNGNSSLDHLRI) is disordered. Polar residues predominate over residues 349–359 (NGNSSLDHLRI).

It belongs to the iron/ascorbate-dependent oxidoreductase family. It depends on Fe(2+) as a cofactor. In terms of tissue distribution, expressed in leaves and seeds. All cultivars with seed-only-functional allele have low to non-detectable GSL-OH expression in the leaves.

The enzyme catalyses gluconapin + AH2 + O2 = progoitrin + A + H2O. Functionally, necessary for the hydroxylation of but-3-enyl glucosinolate to 2-hydroxybut-3-enyl glucosinolate, which is toxic to insects, bacteria and nematodes, inhibits seed germination and produces bitter flavors. The protein is Probable 2-oxoacid dependent dioxygenase of Arabidopsis thaliana (Mouse-ear cress).